Consider the following 240-residue polypeptide: Sialidase 85-1.2 (240 aa).

Over residues Asp127–Glu142 the composition is skewed to acidic residues. Disordered regions lie at residues Asp127–Pro158 and His221–Ala240. Residues Ser144 to Gly155 are compositionally biased toward basic and acidic residues.

It belongs to the glycosyl hydrolase 33 family.

The catalysed reaction is Hydrolysis of alpha-(2-&gt;3)-, alpha-(2-&gt;6)-, alpha-(2-&gt;8)- glycosidic linkages of terminal sialic acid residues in oligosaccharides, glycoproteins, glycolipids, colominic acid and synthetic substrates.. In terms of biological role, developmentally regulated neuraminidase implicated in parasite invasion of cells. May contribute to the pathology during T.cruzi infection by cleaving sialic acid from cells of the immune system. In Trypanosoma cruzi, this protein is Sialidase 85-1.2 (SA85-1.2).